A 115-amino-acid polypeptide reads, in one-letter code: Large ribosomal subunit protein uL24 (115 aa).

It belongs to the universal ribosomal protein uL24 family. Part of the 50S ribosomal subunit.

Functionally, one of two assembly initiator proteins, it binds directly to the 5'-end of the 23S rRNA, where it nucleates assembly of the 50S subunit. Its function is as follows. One of the proteins that surrounds the polypeptide exit tunnel on the outside of the subunit. The sequence is that of Large ribosomal subunit protein uL24 from Aster yellows witches'-broom phytoplasma (strain AYWB).